Consider the following 164-residue polypeptide: Pathogenesis-related protein PRB1-2 (164 aa).

The signal sequence occupies residues 1–24; that stretch reads MQTPKLAILLALAMAAAMVNLSQA. A Pyrrolidone carboxylic acid modification is found at Gln-25. The SCP domain occupies 34–152; sequence PHNAARSAVG…NRGVFITCNY (119 aa). 3 cysteine pairs are disulfide-bonded: Cys-68-Cys-140, Cys-113-Cys-119, and Cys-135-Cys-150.

This sequence belongs to the CRISP family.

Probably involved in the defense reaction of plants against pathogens. This Hordeum vulgare (Barley) protein is Pathogenesis-related protein PRB1-2.